Here is a 513-residue protein sequence, read N- to C-terminus: Calcium-binding mitochondrial carrier protein SCaMC-2 (513 aa).

At 1–233 the chain is on the mitochondrial intermembrane side; sequence MARPRSLVSP…EKQTGMWWRH (233 aa). EF-hand domains follow at residues 55–90, 91–124, 122–157, and 158–193; these read EHET…LGVH, RTEL…RDHE, DHEK…LGVN, and ISEQ…HPAE. Positions 68, 70, 72, 79, 104, 106, 108, 110, and 115 each coordinate Ca(2+). Solcar repeat units lie at residues 228–314, 322–407, and 419–507; these read GMWW…MKRI, LGIH…LKNA, and PGVF…LKLT. The helical transmembrane segment at 234 to 251 threads the bilayer; it reads LVAGGGAGAVSRTCTAPL. Over 252–288 the chain is Mitochondrial matrix; sequence DRLKVLMQVHASRSNNMSMLGGFTQMIREGGIRSLWR. A helical membrane pass occupies residues 289–308; the sequence is GNGINVIKIAPESAIKFMAY. The Mitochondrial intermembrane segment spans residues 309-331; sequence EQMKRIIGSDQETLGIHERLVAG. A helical transmembrane segment spans residues 332 to 345; sequence SLAGVIAQSSIYPM. Over 346 to 381 the chain is Mitochondrial matrix; that stretch reads EVLKTRMALRKTGQYQGMLDCGKKILLKEGVSAFYK. A helical membrane pass occupies residues 382–401; it reads GYVPNMLGIIPYAGIDLAVY. The Mitochondrial intermembrane portion of the chain corresponds to 402–424; it reads ETLKNAWLQRYATSSADPGVFVL. Residues 425-442 form a helical membrane-spanning segment; that stretch reads LACGTISSTCGQLASYPL. Topologically, residues 443–481 are mitochondrial matrix; it reads ALVRTRMQAEASVEGAPQMTMSKLFKHIVKTEGAFGLYR. Residues 482-501 form a helical membrane-spanning segment; sequence GLAPNFMKVIPAVSISYVVY. At 502–513 the chain is on the mitochondrial intermembrane side; that stretch reads ENLKLTLGVQSR.

The protein belongs to the mitochondrial carrier (TC 2.A.29) family.

The protein localises to the mitochondrion inner membrane. Functionally, calcium-dependent mitochondrial solute carrier. The polypeptide is Calcium-binding mitochondrial carrier protein SCaMC-2 (slc25a25) (Xenopus tropicalis (Western clawed frog)).